The primary structure comprises 822 residues: Epidermal growth factor receptor kinase substrate 8 (822 aa).

2 stretches are compositionally biased toward polar residues: residues 1 to 10 (MNGHISNHPS) and 17 to 30 (SQMNGYGSSPTFSQ). The interval 1 to 39 (MNGHISNHPSSFGMYPSQMNGYGSSPTFSQTDREHGSKT) is disordered. Serine 58 carries the phosphoserine modification. A PTB domain is found at 64–194 (QYRVEHLTTF…SDSKGGKQKR (131 aa)). Disordered stretches follow at residues 202–225 (ISNADPSIPPPPRAPAPAPPGTVT) and 298–320 (SKRKKNKKGKRKGPGEGVLTLRA). Positions 208-221 (SIPPPPRAPAPAPP) are enriched in pro residues. Threonine 223 is modified (phosphothreonine). Over residues 299–309 (KRKKNKKGKRK) the composition is skewed to basic residues. A Phosphothreonine modification is found at threonine 317. Serine 476 is subject to Phosphoserine. An SH3 domain is found at 531–590 (QPKKYAKSKYDFVARNNSELSVLKDDILEILDDRKQWWKVRNASGDSGFVPNNILDIVRP). A disordered region spans residues 612-689 (EYGPRPADTP…VDRRKSQMEE (78 aa)). The span at 618–645 (ADTPPAPSPPPTPAPVPVPLPPSTPAPV) shows a compositional bias: pro residues. The residue at position 625 (serine 625) is a Phosphoserine. Position 629 is a phosphothreonine; by MAPK (threonine 629). The effector region stretch occupies residues 649 to 822 (KVPANITRQN…VESFDEGSSH (174 aa)). Residues serine 659, serine 662, and serine 685 each carry the phosphoserine modification. Residues 671 to 687 (DSQRHKQLPVDRRKSQM) show a composition bias toward basic and acidic residues. The interval 680–698 (VDRRKSQMEEVQDELIHRL) is amphipathic helix. Helix bundle regions lie at residues 718–738 (VINITYDSTPEDVKTWLQSKG), 752–757 (GAQLFS), 762–767 (ELRTVC), and 766–785 (VCPEGARVYSQITVQKAALE). Residues 787-822 (SSGSSELQEIMRRRQEKISAAASDSGVESFDEGSSH) are disordered. Phosphoserine occurs at positions 811 and 815.

It belongs to the EPS8 family. In terms of assembly, homodimer. Part of a complex consisting of ABI1, EPS8 and SOS1. Interacts with MYO15A and WHRN. Interacts with LANCL1. Interacts with EGFR; mediates EPS8 phosphorylation. Interacts with BAIAP2. Interacts with SHB. Ubiquitinated by the SCF(FBXW5) E3 ubiquitin-protein ligase complex during G2 phase, leading to its transient degradation and subsequent cell shape changes required to allow mitotic progression. Reappears at the midzone of dividing cells. In terms of processing, phosphorylation at Ser-625 and Thr-629 by MAPK following BDNF treatment promotes removal from actin and filopodia formation. Phosphorylated by several receptor tyrosine kinases. In terms of tissue distribution, expressed in all tissues analyzed, including heart, brain, placenta, lung, liver, skeletal muscle, kidney and pancreas. Expressed in all epithelial and fibroblastic lines examined and in some, but not all, hematopoietic cells.

It is found in the cytoplasm. The protein resides in the cell cortex. It localises to the cell projection. Its subcellular location is the ruffle membrane. The protein localises to the growth cone. It is found in the stereocilium. The protein resides in the synapse. It localises to the synaptosome. Signaling adapter that controls various cellular protrusions by regulating actin cytoskeleton dynamics and architecture. Depending on its association with other signal transducers, can regulate different processes. Together with SOS1 and ABI1, forms a trimeric complex that participates in transduction of signals from Ras to Rac by activating the Rac-specific guanine nucleotide exchange factor (GEF) activity. Acts as a direct regulator of actin dynamics by binding actin filaments and has both barbed-end actin filament capping and actin bundling activities depending on the context. Displays barbed-end actin capping activity when associated with ABI1, thereby regulating actin-based motility process: capping activity is auto-inhibited and inhibition is relieved upon ABI1 interaction. Also shows actin bundling activity when associated with BAIAP2, enhancing BAIAP2-dependent membrane extensions and promoting filopodial protrusions. Involved in the regulation of processes such as axonal filopodia growth, stereocilia length, dendritic cell migration and cancer cell migration and invasion. Acts as a regulator of axonal filopodia formation in neurons: in the absence of neurotrophic factors, negatively regulates axonal filopodia formation via actin-capping activity. In contrast, it is phosphorylated in the presence of BDNF leading to inhibition of its actin-capping activity and stimulation of filopodia formation. Component of a complex with WHRN and MYO15A that localizes at stereocilia tips and is required for elongation of the stereocilia actin core. Indirectly involved in cell cycle progression; its degradation following ubiquitination being required during G2 phase to promote cell shape changes. This is Epidermal growth factor receptor kinase substrate 8 (EPS8) from Homo sapiens (Human).